The chain runs to 171 residues: MTTSCPPPSISDREEQARILCLRLLTARSRTRAQLFGQLAKRGYADHVSERVLDRLAAVGLLDDNDFAEQWVRSRRANVGKSKRALAADLRAKGIDSEVITTVLAGIDPAVERERAEQLVRTRLRREVLSEDDARVSRRLMAMLARRGYSQTTICEVVVAELAAERERRRV.

The protein belongs to the RecX family.

It localises to the cytoplasm. Its function is as follows. Modulates RecA activity. The polypeptide is Regulatory protein RecX (Mycobacterium leprae (strain Br4923)).